Reading from the N-terminus, the 528-residue chain is ADP,ATP carrier protein 1 (528 aa).

12 helical membrane-spanning segments follow: residues 24 to 44, 63 to 83, 93 to 113, 124 to 144, 149 to 169, 184 to 204, 220 to 240, 284 to 304, 327 to 347, 356 to 376, 381 to 401, and 463 to 483; these read LKKV…YTIL, IPFI…LIYA, ALFF…PVVI, AFAD…IAML, FAVF…LMFW, FYAL…PAII, WGVS…IIAA, YMLL…LVEV, FSFW…GNVI, ALVT…LVIF, TGLV…VGAI, and IGAM…VWLT.

Belongs to the ADP/ATP translocase tlc family.

Its subcellular location is the cell membrane. This chain is ADP,ATP carrier protein 1 (tlcA), found in Chlamydia trachomatis serovar D (strain ATCC VR-885 / DSM 19411 / UW-3/Cx).